Consider the following 274-residue polypeptide: Large ribosomal subunit protein uL2cz/uL2cy (274 aa).

The span at 1-15 (MAINLYKTSTPSTRN) shows a compositional bias: polar residues. Disordered regions lie at residues 1-22 (MAIN…DSQV) and 225-274 (PVDH…RRSK).

Belongs to the universal ribosomal protein uL2 family. As to quaternary structure, part of the 50S ribosomal subunit.

It is found in the plastid. Its subcellular location is the chloroplast. This is Large ribosomal subunit protein uL2cz/uL2cy (rpl2-A) from Lobularia maritima (Sweet alyssum).